Reading from the N-terminus, the 520-residue chain is Bifunctional purine biosynthesis protein PurH (520 aa).

An MGS-like domain is found at 1–147; it reads MAKIGRALIS…KNNRDVTVVV (147 aa).

This sequence belongs to the PurH family.

It carries out the reaction (6R)-10-formyltetrahydrofolate + 5-amino-1-(5-phospho-beta-D-ribosyl)imidazole-4-carboxamide = 5-formamido-1-(5-phospho-D-ribosyl)imidazole-4-carboxamide + (6S)-5,6,7,8-tetrahydrofolate. It catalyses the reaction IMP + H2O = 5-formamido-1-(5-phospho-D-ribosyl)imidazole-4-carboxamide. It participates in purine metabolism; IMP biosynthesis via de novo pathway; 5-formamido-1-(5-phospho-D-ribosyl)imidazole-4-carboxamide from 5-amino-1-(5-phospho-D-ribosyl)imidazole-4-carboxamide (10-formyl THF route): step 1/1. Its pathway is purine metabolism; IMP biosynthesis via de novo pathway; IMP from 5-formamido-1-(5-phospho-D-ribosyl)imidazole-4-carboxamide: step 1/1. The sequence is that of Bifunctional purine biosynthesis protein PurH from Citrifermentans bemidjiense (strain ATCC BAA-1014 / DSM 16622 / JCM 12645 / Bem) (Geobacter bemidjiensis).